The primary structure comprises 693 residues: Golgin subfamily A member 6B (693 aa).

Residues 1–11 (MWPQPYLPPHP) are compositionally biased toward pro residues. Disordered regions lie at residues 1–72 (MWPQ…SQYQ), 497–551 (LPGE…VERR), 629–650 (NPAD…AGEQ), and 660–679 (NNVE…DNPT). Residues 77 to 611 (ALESSSVTIS…KLLELQELVL (535 aa)) are a coiled coil. Positions 537–551 (LPKEKADGTEQVERR) are enriched in basic and acidic residues.

Belongs to the GOLGA6 family.

This is Golgin subfamily A member 6B (GOLGA6B) from Homo sapiens (Human).